The sequence spans 427 residues: GTPase Obg (427 aa).

The region spanning 1-158 (MFVDIAKIYV…LWVILELKVL (158 aa)) is the Obg domain. An OBG-type G domain is found at 159-330 (ADVGLIGYPN…VLKRAYELLK (172 aa)). GTP is bound by residues 165 to 172 (GYPNVGKS), 190 to 194 (FTTKY), 212 to 215 (DIPG), 282 to 285 (NKMD), and 311 to 313 (SAA). Positions 172 and 192 each coordinate Mg(2+). An OCT domain is found at 347 to 427 (FVYYKKKDVK…ILDVEFEYYE (81 aa)).

It belongs to the TRAFAC class OBG-HflX-like GTPase superfamily. OBG GTPase family. As to quaternary structure, monomer. It depends on Mg(2+) as a cofactor.

It localises to the cytoplasm. Its function is as follows. An essential GTPase which binds GTP, GDP and possibly (p)ppGpp with moderate affinity, with high nucleotide exchange rates and a fairly low GTP hydrolysis rate. Plays a role in control of the cell cycle, stress response, ribosome biogenesis and in those bacteria that undergo differentiation, in morphogenesis control. In Caldicellulosiruptor saccharolyticus (strain ATCC 43494 / DSM 8903 / Tp8T 6331), this protein is GTPase Obg.